We begin with the raw amino-acid sequence, 663 residues long: CXXC-type zinc finger protein 1 (663 aa).

The PHD-type zinc finger occupies 60–110; sequence QAYCICRSSDCSRFMIGCDGCEEWYHGDCIGITEKEAKHIKQYYCRRCKKE. Positions 134–161 are enriched in low complexity; sequence TSLNAPGVGPSGAAPAAAPVASATTSQQ. The interval 134 to 183 is disordered; that stretch reads TSLNAPGVGPSGAAPAAAPVASATTSQQAPPPTTAAAKRKNSSAREPKMG. A CXXC-type zinc finger spans residues 175-219; sequence SSAREPKMGKRCGTCEGCRRPNCNQCDACRVRVGHKPRCIFRTCV. The Zn(2+) site is built by Cys-186, Cys-189, Cys-192, Cys-197, Cys-200, Cys-203, Cys-213, and Cys-218. The segment at 230-254 is disordered; sequence QATQAGPSRKREKAAPKSRNVQVGP. Ser-258 carries the post-translational modification Phosphoserine.

As to quaternary structure, component of the SET1 complex, composed at least of the catalytic subunit Set1, wds/WDR5, Wdr82, Rbbp5, ash2, Cfp1/CXXC1, hcf and Dpy-30L1.

The protein localises to the nucleus. Component of the SET1 complex that specifically di- and trimethylates 'Lys-4' of histone H3. Essential for Set1 association with chromatin and trimethylation of histone H3 at 'Lys-4' at transcription puffs. Additionally, is critical for general chromosomal association of Set1. The polypeptide is CXXC-type zinc finger protein 1 (Cfp1) (Drosophila melanogaster (Fruit fly)).